A 338-amino-acid polypeptide reads, in one-letter code: MTRF1L release factor glutamine methyltransferase (338 aa).

Residues 167–171 (GCGSG), aspartate 190, tryptophan 225, and asparagine 239 contribute to the S-adenosyl-L-methionine site. 239–242 (NPPY) serves as a coordination point for substrate.

Belongs to the protein N5-glutamine methyltransferase family.

Its subcellular location is the mitochondrion. The enzyme catalyses L-glutaminyl-[peptide chain release factor] + S-adenosyl-L-methionine = N(5)-methyl-L-glutaminyl-[peptide chain release factor] + S-adenosyl-L-homocysteine + H(+). Its function is as follows. N5-glutamine methyltransferase responsible for the methylation of the glutamine residue in the universally conserved GGQ motif of the mitochondrial translation release factors MTRF1, MTRF1L, MRPL58/ICT1 and MTRFR. The chain is MTRF1L release factor glutamine methyltransferase (HEMK1) from Homo sapiens (Human).